The primary structure comprises 91 residues: Mercuric transport protein periplasmic component (91 aa).

The first 19 residues, 1-19 (MKKLFASLAIAAVVAPVWA), serve as a signal peptide directing secretion. Residues 22-88 (QTVTLSVPGM…ATEDAGYPSS (67 aa)) enclose the HMA domain. Residues cysteine 33 and cysteine 36 each contribute to the Hg(2+) site.

Belongs to the MerP family. In terms of assembly, monomer.

It is found in the periplasm. Functionally, involved in mercury resistance. Acts as a mercury scavenger that specifically binds to a mercuric ion in the periplasm and probably passes it to the cytoplasmic mercuric reductase MerA via the mercuric transport protein MerT. The polypeptide is Mercuric transport protein periplasmic component (Serratia marcescens).